Consider the following 438-residue polypeptide: Fibrinogen gamma chain (438 aa).

A signal peptide spans 1 to 25 (MTRLPKQGLLLLQSLALLSSAFGNI). The N-linked (GlcNAc...) asparagine glycan is linked to Asn-76. The Fibrinogen C-terminal domain maps to 167–414 (QIQEFTGKDC…SVTMKIMPLN (248 aa)). A disulfide bridge connects residues Cys-176 and Cys-205. Residues Asp-341, Asp-343, and Gly-347 each coordinate Ca(2+). An intrachain disulfide couples Cys-349 to Cys-362.

As to quaternary structure, heterohexamer; disulfide linked. Contains 2 sets of 3 non-identical chains (alpha, beta and gamma). The 2 heterotrimers are in head to head conformation with the N-termini in a small central domain. Post-translationally, conversion of fibrinogen to fibrin is triggered by thrombin, which cleaves fibrinopeptides A and B from alpha and beta chains, and thus exposes the N-terminal polymerization sites responsible for the formation of the soft clot. The soft clot is converted into the hard clot by factor XIIIA which catalyzes the epsilon-(gamma-glutamyl)lysine cross-linking between gamma chains (stronger) and between alpha chains (weaker) of different monomers.

Its subcellular location is the secreted. Its function is as follows. Together with fibrinogen alpha (FGA) and fibrinogen beta (FGB), polymerizes to form an insoluble fibrin matrix. Has a major function in hemostasis as one of the primary components of blood clots. The polypeptide is Fibrinogen gamma chain (fgg) (Xenopus laevis (African clawed frog)).